We begin with the raw amino-acid sequence, 610 residues long: Aspercryptin biosynthesis cluster-specific transcription regulator atnN (610 aa).

Residues Met1–Ser26 show a composition bias toward polar residues. Positions Met1–Arg27 are disordered. The segment at residues Cys30–Cys57 is a DNA-binding region (zn(2)-C6 fungal-type). Disordered regions lie at residues Thr61–Ser81 and Ala427–Pro493. Low complexity-rich tracts occupy residues Gln66–Ala79 and Ser437–Pro474.

The protein resides in the nucleus. Functionally, transcription factor that positively regulates the cluster that mediate the production of aspercryptins, linear lipopeptides built from six amino acids including 2 highly unusual and nonproteogenic amino acids, 2-amino-octanoic acid (2aoa) and 2-amino-dodecanol (2adol). The polypeptide is Aspercryptin biosynthesis cluster-specific transcription regulator atnN (Emericella nidulans (strain FGSC A4 / ATCC 38163 / CBS 112.46 / NRRL 194 / M139) (Aspergillus nidulans)).